A 552-amino-acid chain; its full sequence is CTP synthase (552 aa).

Residues 1–270 (MTKFVFVTGG…DGLICDKLRL (270 aa)) form an amidoligase domain region. Ser13 contacts CTP. Residue Ser13 participates in UTP binding. ATP-binding positions include 14 to 19 (SLGKGI) and Asp71. Mg(2+)-binding residues include Asp71 and Glu144. CTP is bound by residues 151–153 (DIE), 191–196 (KTKPTQ), and Lys227. UTP is bound by residues 191 to 196 (KTKPTQ) and Lys227. Residues 295 to 548 (KIAMVGKYVE…VKAAIERQKA (254 aa)) form the Glutamine amidotransferase type-1 domain. Position 357 (Gly357) interacts with L-glutamine. The active-site Nucleophile; for glutamine hydrolysis is the Cys384. Residues 385-388 (LGMQ), Glu408, and Arg474 contribute to the L-glutamine site. Active-site residues include His521 and Glu523.

It belongs to the CTP synthase family. As to quaternary structure, homotetramer.

It carries out the reaction UTP + L-glutamine + ATP + H2O = CTP + L-glutamate + ADP + phosphate + 2 H(+). The catalysed reaction is L-glutamine + H2O = L-glutamate + NH4(+). The enzyme catalyses UTP + NH4(+) + ATP = CTP + ADP + phosphate + 2 H(+). Its pathway is pyrimidine metabolism; CTP biosynthesis via de novo pathway; CTP from UDP: step 2/2. Allosterically activated by GTP, when glutamine is the substrate; GTP has no effect on the reaction when ammonia is the substrate. The allosteric effector GTP functions by stabilizing the protein conformation that binds the tetrahedral intermediate(s) formed during glutamine hydrolysis. Inhibited by the product CTP, via allosteric rather than competitive inhibition. Catalyzes the ATP-dependent amination of UTP to CTP with either L-glutamine or ammonia as the source of nitrogen. Regulates intracellular CTP levels through interactions with the four ribonucleotide triphosphates. This chain is CTP synthase, found in Delftia acidovorans (strain DSM 14801 / SPH-1).